The primary structure comprises 749 residues: Metabotropic glutamate receptor-like protein M (749 aa).

Residues 1 to 22 form the signal peptide; the sequence is MIKLILSLIFLIICCNINPSES. Residues 23 to 385 are Extracellular-facing; that stretch reads FKLITLTTGP…KIEFSSSVQK (363 aa). N-linked (GlcNAc...) asparagine glycosylation is found at Asn-67, Asn-164, Asn-257, Asn-271, and Asn-345. A helical membrane pass occupies residues 386–406; sequence GFSIVSGCLIAFVILMMVGIV. The Cytoplasmic segment spans residues 407–419; that stretch reads YYKDTPSIRSASP. Residues 420–440 traverse the membrane as a helical segment; it reads IFLNFSLIGGIIIYIGIIIWV. Residues 441 to 456 lie on the Extracellular side of the membrane; the sequence is GPISTHQCNARFWLVT. A helical membrane pass occupies residues 457–477; sequence LGFSTLIGSLVVKNFRIWLIF. Over 478 to 492 the chain is Cytoplasmic; that stretch reads DNPELKAIKITNYQL. A helical transmembrane segment spans residues 493–513; the sequence is FPWVGLCLVINIVLMAILTSV. Topologically, residues 514–544 are extracellular; sequence GDLKAIEAQGIDSLGKYEYMTVCKMNSAGAS. A helical membrane pass occupies residues 545–565; sequence TLYSILAYFAALLLVGVFVSW. Over 566 to 579 the chain is Cytoplasmic; the sequence is KIRIVDIEEFNESK. A helical transmembrane segment spans residues 580–600; it reads AIANTLYAVSFCLFVIVPLMI. Residues 601 to 609 lie on the Extracellular side of the membrane; sequence SPQEKQSET. A helical membrane pass occupies residues 610–630; the sequence is IILCVAGLFITTAALLIVFIP. The Cytoplasmic portion of the chain corresponds to 631 to 749; that stretch reads KFWRVFIYGK…EEPVKTESQE (119 aa). Residues 658–749 form a disordered region; it reads ARAESLSKNS…EEPVKTESQE (92 aa). Residues 698-716 show a composition bias toward polar residues; the sequence is SSLSEPNKPTKNNDGNVNV. The segment covering 725 to 740 has biased composition (acidic residues); it reads FTDDTISEFDENEVNE.

This sequence in the N-terminal section; belongs to the BMP lipoprotein family. In the C-terminal section; belongs to the G-protein coupled receptor 3 family. GABA-B receptor subfamily.

The protein resides in the membrane. This Dictyostelium discoideum (Social amoeba) protein is Metabotropic glutamate receptor-like protein M (grlM).